A 295-amino-acid chain; its full sequence is Probable isochorismatase (295 aa).

The interval 1 to 21 is disordered; that stretch reads MGIPKIAGYPLPTPAEFPDNR. The Carrier domain occupies 207-286; it reads EIRSQKPLTL…EWWLVIEQAR (80 aa). Ser-247 is subject to O-(pantetheine 4'-phosphoryl)serine.

This sequence belongs to the isochorismatase family. The cofactor is pantetheine 4'-phosphate.

It carries out the reaction isochorismate + H2O = (2S,3S)-2,3-dihydroxy-2,3-dihydrobenzoate + pyruvate. Its pathway is siderophore biosynthesis; vulnibactin biosynthesis. In terms of biological role, involved in the biosynthesis of the catechol siderophore vulnibactin. Vulnibactin is a chelating compound involved in transporting iron from the bacterial environment into the cell cytoplasm. This chain is Probable isochorismatase (venB), found in Vibrio vulnificus (strain CMCP6).